The chain runs to 257 residues: 2,3,4,5-tetrahydropyridine-2,6-dicarboxylate N-acetyltransferase (257 aa).

It belongs to the transferase hexapeptide repeat family. DapH subfamily.

The enzyme catalyses (S)-2,3,4,5-tetrahydrodipicolinate + acetyl-CoA + H2O = L-2-acetamido-6-oxoheptanedioate + CoA. It participates in amino-acid biosynthesis; L-lysine biosynthesis via DAP pathway; LL-2,6-diaminopimelate from (S)-tetrahydrodipicolinate (acetylase route): step 1/3. Catalyzes the transfer of an acetyl group from acetyl-CoA to tetrahydrodipicolinate. This Lactococcus lactis subsp. cremoris (strain SK11) protein is 2,3,4,5-tetrahydropyridine-2,6-dicarboxylate N-acetyltransferase.